The primary structure comprises 544 residues: Epidermal growth factor-like protein 6 (544 aa).

The N-terminal stretch at 1-30 (MAITGGMQSSDMVLLLWITVICACCSFVDS) is a signal peptide. Residues 63–98 (RKGQCEAVCEQGCKHGECVGPNKCKCFPGFTGKNCN) enclose the EGF-like 1 domain. 6 cysteine pairs are disulfide-bonded: Cys67–Cys80, Cys71–Cys86, Cys88–Cys97, Cys104–Cys115, Cys111–Cys124, and Cys126–Cys138. One can recognise an EGF-like 2; calcium-binding domain in the interval 100–139 (DLNECGLKPRPCEHRCMNTHGSYKCYCLNGYMLMPDGSCS). An EGF-like 3 domain is found at 144-178 (CAMANCQYGCEQVKGDIRCLCPSGGLQLGPDGRTC). The EGF-like 4; calcium-binding domain maps to 180 to 218 (DIDECAVGKASCPINRRCVNTFGSYYCKCQIGYELKYVN). Cystine bridges form between Cys184-Cys197, Cys191-Cys206, Cys229-Cys242, Cys236-Cys251, and Cys253-Cys264. The 41-residue stretch at 225–265 (DINECLLNTHKCSINADCLNTQGSFKCRCKHGFKGNGQECS) folds into the EGF-like 5; calcium-binding domain. The disordered stretch occupies residues 332 to 357 (GNDNDEEEGEIEEEEEEELDEEDEEN). Residues 333 to 367 (NDNDEEEGEIEEEEEEELDEEDEENVIEEEKLLRG) are a coiled coil. Acidic residues predominate over residues 334–357 (DNDEEEGEIEEEEEEELDEEDEEN). Positions 399-543 (VDCRFDQGTC…VFLSSGPCSD (145 aa)) constitute an MAM domain.

It belongs to the nephronectin family.

Its subcellular location is the secreted. The protein resides in the extracellular space. It localises to the extracellular matrix. It is found in the basement membrane. May play a role in organ morphogenesis. Promotes matrix assembly. The protein is Epidermal growth factor-like protein 6 (egfl6) of Xenopus laevis (African clawed frog).